The sequence spans 139 residues: MEKTFLMVKPDGVKRGLIGEIISRFENKGYTLNRLEMVTPSVEVAEAHYAEHKEKPFFGELVEFLTSGPVVAMEWEGEDIVAVSRLMIGKTKPVDAQPGTIRGDFASTMSQNVIHGSDSVDSAERELSLWFAEVASHVS.

ATP contacts are provided by K9, F57, R85, T91, R102, and N112. Residue H115 is the Pros-phosphohistidine intermediate of the active site.

The protein belongs to the NDK family. Homotetramer. Requires Mg(2+) as cofactor.

It localises to the cytoplasm. The catalysed reaction is a 2'-deoxyribonucleoside 5'-diphosphate + ATP = a 2'-deoxyribonucleoside 5'-triphosphate + ADP. It carries out the reaction a ribonucleoside 5'-diphosphate + ATP = a ribonucleoside 5'-triphosphate + ADP. Major role in the synthesis of nucleoside triphosphates other than ATP. The ATP gamma phosphate is transferred to the NDP beta phosphate via a ping-pong mechanism, using a phosphorylated active-site intermediate. In Exiguobacterium sp. (strain ATCC BAA-1283 / AT1b), this protein is Nucleoside diphosphate kinase.